Consider the following 136-residue polypeptide: Histone H3-like 3 (136 aa).

The segment covering 1–15 (MARTKQTARKSHGGK) has biased composition (basic residues). A disordered region spans residues 1-42 (MARTKQTARKSHGGKAPRTLLATKAARKSAPTTGGVKKPHRY). 2 positions are modified to N6,N6,N6-trimethyllysine; alternate: Lys-5 and Lys-10. 2 positions are modified to N6,N6-dimethyllysine; alternate: Lys-5 and Lys-10. N6-methyllysine; alternate occurs at positions 5 and 10. The residue at position 10 (Lys-10) is an N6-acetyllysine; alternate. Phosphoserine is present on Ser-11. Residue Lys-15 is modified to N6-acetyllysine. 2 positions are modified to N6-methyllysine; alternate: Lys-24 and Lys-28. Position 24 is an N6-acetyllysine; alternate (Lys-24). At Lys-28 the chain carries N6,N6,N6-trimethyllysine; alternate. Lys-28 is subject to N6,N6-dimethyllysine; alternate. Residue Ser-29 is modified to Phosphoserine. Lys-37 carries the N6,N6,N6-trimethyllysine; alternate modification. Lys-37 is modified (N6,N6-dimethyllysine; alternate). Lys-37 is modified (N6-methyllysine; alternate).

It belongs to the histone H3 family. In terms of assembly, the nucleosome is a histone octamer containing two molecules each of H2A, H2B, H3 and H4 assembled in one H3-H4 heterotetramer and two H2A-H2B heterodimers. The octamer wraps approximately 147 bp of DNA. In terms of tissue distribution, expressed in roots, seedlings, leaves and open flowers.

Its subcellular location is the nucleus. The protein resides in the chromosome. In terms of biological role, core component of nucleosome. Nucleosomes wrap and compact DNA into chromatin, limiting DNA accessibility to the cellular machineries which require DNA as a template. Histones thereby play a central role in transcription regulation, DNA repair, DNA replication and chromosomal stability. DNA accessibility is regulated via a complex set of post-translational modifications of histones, also called histone code, and nucleosome remodeling. The polypeptide is Histone H3-like 3 (Arabidopsis thaliana (Mouse-ear cress)).